Here is a 1413-residue protein sequence, read N- to C-terminus: DNA-directed RNA polymerase subunit beta' (1413 aa).

Zn(2+) contacts are provided by cysteine 70, cysteine 72, cysteine 85, and cysteine 88. Mg(2+) is bound by residues aspartate 461, aspartate 463, and aspartate 465. Residues cysteine 820, cysteine 894, cysteine 901, and cysteine 904 each contribute to the Zn(2+) site.

Belongs to the RNA polymerase beta' chain family. In terms of assembly, the RNAP catalytic core consists of 2 alpha, 1 beta, 1 beta' and 1 omega subunit. When a sigma factor is associated with the core the holoenzyme is formed, which can initiate transcription. Mg(2+) is required as a cofactor. It depends on Zn(2+) as a cofactor.

The enzyme catalyses RNA(n) + a ribonucleoside 5'-triphosphate = RNA(n+1) + diphosphate. Functionally, DNA-dependent RNA polymerase catalyzes the transcription of DNA into RNA using the four ribonucleoside triphosphates as substrates. This is DNA-directed RNA polymerase subunit beta' from Cupriavidus metallidurans (strain ATCC 43123 / DSM 2839 / NBRC 102507 / CH34) (Ralstonia metallidurans).